We begin with the raw amino-acid sequence, 123 residues long: MSVAILGKGKKVALKRRHARIRKRISGTPERPRLVVTRSNRHMVAQVVDDTKGITLVSASTLQADFAGFEGTKTEAAKKVGELIAEKAKAAGITAVVFDRGGNKYTGRVAAVADGAREGGLAL.

This sequence belongs to the universal ribosomal protein uL18 family. As to quaternary structure, part of the 50S ribosomal subunit; part of the 5S rRNA/L5/L18/L25 subcomplex. Contacts the 5S and 23S rRNAs.

In terms of biological role, this is one of the proteins that bind and probably mediate the attachment of the 5S RNA into the large ribosomal subunit, where it forms part of the central protuberance. This chain is Large ribosomal subunit protein uL18, found in Bifidobacterium longum (strain DJO10A).